We begin with the raw amino-acid sequence, 1177 residues long: Tyrosine-protein kinase hopscotch (1177 aa).

Positions 1-41 (MALANGGEDRMDDSSSGRTSLADSASLTNSSLRSGTSSQSI) are disordered. Positions 16–41 (SGRTSLADSASLTNSSLRSGTSSQSI) are enriched in polar residues. S40 and S321 each carry phosphoserine. The 369-residue stretch at 46 to 414 (GTIRVFNFTT…IYIRLSSKWM (369 aa)) folds into the FERM domain. Residues 433 to 539 (HCHGPIGGAY…YRIPASKYDK (107 aa)) enclose the SH2; atypical domain. 2 Protein kinase domains span residues 582–843 (YPDS…AEIL) and 892–1164 (YNME…HPTD). ATP contacts are provided by residues 898-906 (IGRGHYGTV) and K926. The active-site Proton acceptor is D1014. Phosphotyrosine; by autocatalysis is present on residues Y1047 and Y1048. Residues 1158–1177 (KVTHPTDGHQSPPNQPTDAE) are disordered.

It belongs to the protein kinase superfamily. Tyr protein kinase family. JAK subfamily. As to quaternary structure, forms a complex with Hsp83 and piwi; probably Hop mediates the interaction between piwi and Hsp83.

It localises to the endomembrane system. It carries out the reaction L-tyrosyl-[protein] + ATP = O-phospho-L-tyrosyl-[protein] + ADP + H(+). Tyrosine kinase of the non-receptor type, phosphorylates the marelle protein. Required maternally for the establishment of the normal array of embryonic segments: involved in the control of pair-rule gene transcription in a stripe-specific manner. Together with Hsp83 and piwi, mediates canalization, also known as developmental robustness, likely via epigenetic silencing of existing genetic variants and suppression of transposon-induced new genetic variation. This chain is Tyrosine-protein kinase hopscotch (hop), found in Drosophila melanogaster (Fruit fly).